Reading from the N-terminus, the 476-residue chain is Cysteine--tRNA ligase (476 aa).

Residue C29 coordinates Zn(2+). Positions 31–41 (PTVYDYTHLGH) match the 'HIGH' region motif. Zn(2+) contacts are provided by C209, H234, and E238. Positions 266–270 (KMSKS) match the 'KMSKS' region motif. K269 serves as a coordination point for ATP.

It belongs to the class-I aminoacyl-tRNA synthetase family. The cofactor is Zn(2+).

Its subcellular location is the cytoplasm. The catalysed reaction is tRNA(Cys) + L-cysteine + ATP = L-cysteinyl-tRNA(Cys) + AMP + diphosphate. The polypeptide is Cysteine--tRNA ligase (Thermococcus onnurineus (strain NA1)).